Consider the following 157-residue polypeptide: Small ribosomal subunit protein uS7 (157 aa).

It belongs to the universal ribosomal protein uS7 family. In terms of assembly, part of the 30S ribosomal subunit. Contacts proteins S9 and S11.

Functionally, one of the primary rRNA binding proteins, it binds directly to 16S rRNA where it nucleates assembly of the head domain of the 30S subunit. Is located at the subunit interface close to the decoding center, probably blocks exit of the E-site tRNA. This Borrelia garinii subsp. bavariensis (strain ATCC BAA-2496 / DSM 23469 / PBi) (Borreliella bavariensis) protein is Small ribosomal subunit protein uS7.